A 1162-amino-acid chain; its full sequence is MSSILGKRKNEEVVSFSPLKRISVEKSLLDSTAYNNSLDWLRSKNFKVSCLLKHFNSKIINDHPLSGSCYTDIGYALINSRKACFILSYRQSLGTAEPPTITFPLPEEDSNGFSGQNALTAFVPSDASDKEPGLLIVMPISGRIAYWTSIGNALAQSYICPQGMESLIKLLPKEKCEHLCCSNPMKFIISTNFGRLFSVQLRDPAGQPDVSVQLFASDISTFSTILQKMKIFNYPSIHIIALKSPPLFSPYQHLLYVAEASGLLEIYDLKLENKLVSGMNLSPIFKQVLREGCPDASGLEVLDLTICPTNGNLVSFLVCWKNSINYRYMIISLDFSDISSPSVMNIHPLYSFSSKSLESSKLHYSSSGNSLFVVLTDAVIIVHVQEDDKDIVSRTSWEEVIRMNTNVSGGIFMSTCYKYVLGKYSIPTESCFIATPYSGIAEIEVHSLEHPANNESLVKSKLEEAVFYSFLPGNPIDFSCNYLRSIKKPELERIIVDLGMDILNSRSTHLPPLFASLMQHLSCRLNSLNNLVRYIRSMSLDVDRQVLYKLRVMGEKCNSVRYLWNTIDTEFSTVSHSLIFQRIIYRLTQSASSDNALREWFLHNIESIDQLIAQAHEFCIDSGSRVQELPLEVLDVIMEANEVILAIQSSALAYRRESQKIYKLSIDTFGEEVPWTSTPETLVLLCRQFELTRSALVQSHQGTSDVENTFKIKDKGVLRNVVSNLEVQLVALTEVCFDAYSERIRWIEQRCGKDASEIQDVKEAFAVNRRFWVQTLSDIGKGSSAIRIAEKYSDYRSLVELCYQLYEDNELTDALNNYLDLFGIKFAFILYDYFVENGMALELLNSDRFNKSYLKQFFKSRDYNQISWMHDMRLGDYDAASHRLLQLATKQEKLVDKKESELSLSKLFLYAVPSNSGNIRDLVLVEQKLEQLHIQKMVSKSVMPVVERLRSQGKKYQLVEAVVDDLIGAKVAPVIARQVMQRVVKKFIAGQVVEATELLEYLSFSLYRREDLVEGEVTDYYLALRLLLTTRLTDDAKRFYENTIWRRAVLHDNWIQVLDTQGKNDAIIETQFRMSALYRTLEAVTINGLFHEGLIRPGSLSSCKFEGYDPQNLISIYPPARFGDVTEVTKVLNRESVKLDHYLTKTNLNTCYISMCLSCDTI.

Belongs to the nucleoporin Nup133 family. In terms of assembly, component of the npc107-120 complex which consists of nup85, nup107, nup120, nup131, nup132 and seh1. Interacts with nup107.

It localises to the nucleus envelope. Its function is as follows. Functions as a component of the nuclear pore complex (NPC). NPC components, collectively referred to as nucleoporins (NUPs), can play the role of both NPC structural components and of docking or interaction partners for transiently associated nuclear transport factors. Active directional transport is assured by both, a Phe-Gly (FG) repeat affinity gradient for these transport factors across the NPC and a transport cofactor concentration gradient across the nuclear envelope. The polypeptide is Nucleoporin nup132 (nup132) (Schizosaccharomyces pombe (strain 972 / ATCC 24843) (Fission yeast)).